Here is a 946-residue protein sequence, read N- to C-terminus: Bifunctional glutamine synthetase adenylyltransferase/adenylyl-removing enzyme (946 aa).

The tract at residues 1–440 (MKPLSSPLQQ…VFNELIGDDE (440 aa)) is adenylyl removase. The adenylyl transferase stretch occupies residues 449 to 946 (SEQWRELWQD…ASWQKWLVEE (498 aa)).

It belongs to the GlnE family. Mg(2+) is required as a cofactor.

It carries out the reaction [glutamine synthetase]-O(4)-(5'-adenylyl)-L-tyrosine + phosphate = [glutamine synthetase]-L-tyrosine + ADP. It catalyses the reaction [glutamine synthetase]-L-tyrosine + ATP = [glutamine synthetase]-O(4)-(5'-adenylyl)-L-tyrosine + diphosphate. In terms of biological role, involved in the regulation of glutamine synthetase GlnA, a key enzyme in the process to assimilate ammonia. When cellular nitrogen levels are high, the C-terminal adenylyl transferase (AT) inactivates GlnA by covalent transfer of an adenylyl group from ATP to specific tyrosine residue of GlnA, thus reducing its activity. Conversely, when nitrogen levels are low, the N-terminal adenylyl removase (AR) activates GlnA by removing the adenylyl group by phosphorolysis, increasing its activity. The regulatory region of GlnE binds the signal transduction protein PII (GlnB) which indicates the nitrogen status of the cell. The polypeptide is Bifunctional glutamine synthetase adenylyltransferase/adenylyl-removing enzyme (Shigella flexneri).